A 246-amino-acid chain; its full sequence is Proteasome subunit alpha (246 aa).

Belongs to the peptidase T1A family. The 20S proteasome core is composed of 14 alpha and 14 beta subunits that assemble into four stacked heptameric rings, resulting in a barrel-shaped structure. The two inner rings, each composed of seven catalytic beta subunits, are sandwiched by two outer rings, each composed of seven alpha subunits. The catalytic chamber with the active sites is on the inside of the barrel. Has a gated structure, the ends of the cylinder being occluded by the N-termini of the alpha-subunits. Is capped at one or both ends by the proteasome regulatory ATPase, PAN.

The protein resides in the cytoplasm. With respect to regulation, the formation of the proteasomal ATPase PAN-20S proteasome complex, via the docking of the C-termini of PAN into the intersubunit pockets in the alpha-rings, triggers opening of the gate for substrate entry. Interconversion between the open-gate and close-gate conformations leads to a dynamic regulation of the 20S proteasome proteolysis activity. Its function is as follows. Component of the proteasome core, a large protease complex with broad specificity involved in protein degradation. The polypeptide is Proteasome subunit alpha (Methanopyrus kandleri (strain AV19 / DSM 6324 / JCM 9639 / NBRC 100938)).